A 400-amino-acid polypeptide reads, in one-letter code: 8-amino-7-oxononanoate synthase (400 aa).

R21 is a substrate binding site. Residue 112–113 (GY) coordinates pyridoxal 5'-phosphate. A substrate-binding site is contributed by H137. Positions 183, 211, and 239 each coordinate pyridoxal 5'-phosphate. The residue at position 242 (K242) is an N6-(pyridoxal phosphate)lysine. Residue T358 participates in substrate binding.

Belongs to the class-II pyridoxal-phosphate-dependent aminotransferase family. BioF subfamily. In terms of assembly, homodimer. Requires pyridoxal 5'-phosphate as cofactor.

It carries out the reaction 6-carboxyhexanoyl-[ACP] + L-alanine + H(+) = (8S)-8-amino-7-oxononanoate + holo-[ACP] + CO2. It functions in the pathway cofactor biosynthesis; biotin biosynthesis. In terms of biological role, catalyzes the decarboxylative condensation of pimeloyl-[acyl-carrier protein] and L-alanine to produce 8-amino-7-oxononanoate (AON), [acyl-carrier protein], and carbon dioxide. This chain is 8-amino-7-oxononanoate synthase, found in Burkholderia lata (strain ATCC 17760 / DSM 23089 / LMG 22485 / NCIMB 9086 / R18194 / 383).